The chain runs to 28 residues: Cyclotide ltri-A (28 aa).

Residues glycine 1–asparagine 28 constitute a cross-link (cyclopeptide (Gly-Asn)). 3 disulfide bridges follow: cysteine 4/cysteine 18, cysteine 8/cysteine 20, and cysteine 13/cysteine 25.

This sequence belongs to the cyclotide family. Bracelet subfamily. This is a cyclic peptide.

In terms of biological role, probably participates in a plant defense mechanism. This Leonia triandra protein is Cyclotide ltri-A.